The following is a 307-amino-acid chain: Zinc-alpha-2-glycoprotein (307 aa).

Positions 1-17 (MVPVLLSLPLLLGPAVF) are cleaved as a signal peptide. At Q18 the chain carries Pyrrolidone carboxylic acid. A disulfide bond links C118 and C181. Residues N123, N190, and N254 are each glycosylated (N-linked (GlcNAc...) asparagine). Residues 202 to 287 (PTVTITSRVI…DHRGFSQSLS (86 aa)) enclose the Ig-like C1-type domain. Cysteines 220 and 275 form a disulfide.

It belongs to the MHC class I family. In terms of assembly, interacts with PIP.

It localises to the secreted. In terms of biological role, stimulates lipid degradation in adipocytes and causes the extensive fat losses associated with some advanced cancers. The sequence is that of Zinc-alpha-2-glycoprotein (Azgp1) from Mus musculus (Mouse).